We begin with the raw amino-acid sequence, 431 residues long: Na(+)-translocating NADH-quinone reductase subunit F (431 aa).

A helical transmembrane segment spans residues 10–30 (IFVASAAFCSLGLILVAVILL). A 2Fe-2S ferredoxin-type domain is found at 41–133 (CKLKINNDDS…DLCLEVEERY (93 aa)). Residues Cys-76, Cys-82, Cys-85, and Cys-117 each contribute to the [2Fe-2S] cluster site. One can recognise an FAD-binding FR-type domain in the interval 136–286 (ASSWEGTVVS…SGPYGESFMK (151 aa)).

This sequence belongs to the NqrF family. In terms of assembly, composed of six subunits; NqrA, NqrB, NqrC, NqrD, NqrE and NqrF. Requires [2Fe-2S] cluster as cofactor. It depends on FAD as a cofactor.

The protein resides in the cell inner membrane. It carries out the reaction a ubiquinone + n Na(+)(in) + NADH + H(+) = a ubiquinol + n Na(+)(out) + NAD(+). Functionally, NQR complex catalyzes the reduction of ubiquinone-1 to ubiquinol by two successive reactions, coupled with the transport of Na(+) ions from the cytoplasm to the periplasm. The first step is catalyzed by NqrF, which accepts electrons from NADH and reduces ubiquinone-1 to ubisemiquinone by a one-electron transfer pathway. The protein is Na(+)-translocating NADH-quinone reductase subunit F of Chlamydia trachomatis serovar A (strain ATCC VR-571B / DSM 19440 / HAR-13).